The chain runs to 569 residues: Oxygen-dependent choline dehydrogenase (569 aa).

Residue 9 to 38 (DYVIIGGGSAGSVLGNRLSEDKDKEVLVLE) participates in FAD binding. The active-site Proton acceptor is the histidine 475.

The protein belongs to the GMC oxidoreductase family. FAD serves as cofactor.

The enzyme catalyses choline + A = betaine aldehyde + AH2. The catalysed reaction is betaine aldehyde + NAD(+) + H2O = glycine betaine + NADH + 2 H(+). It participates in amine and polyamine biosynthesis; betaine biosynthesis via choline pathway; betaine aldehyde from choline (cytochrome c reductase route): step 1/1. Its function is as follows. Involved in the biosynthesis of the osmoprotectant glycine betaine. Catalyzes the oxidation of choline to betaine aldehyde and betaine aldehyde to glycine betaine at the same rate. The sequence is that of Oxygen-dependent choline dehydrogenase from Staphylococcus aureus (strain MSSA476).